The sequence spans 300 residues: Free fatty acid receptor 1 (300 aa).

At Met-1 to Ser-8 the chain is on the extracellular side. Residues Phe-9–Val-31 traverse the membrane as a helical segment. The Cytoplasmic portion of the chain corresponds to Ser-32–Ser-41. Residues Leu-42–Val-64 form a helical membrane-spanning segment. Residues Glu-65–Cys-79 lie on the Extracellular side of the membrane. Cys-79 and Cys-170 are joined by a disulfide. The helical transmembrane segment at Pro-80–Ser-101 threads the bilayer. The Cytoplasmic portion of the chain corresponds to Ala-102–Cys-121. Residues Tyr-122 to Leu-142 form a helical membrane-spanning segment. Topologically, residues Gly-143 to Ser-178 are extracellular. An N-linked (GlcNAc...) asparagine glycan is attached at Asn-153. A helical membrane pass occupies residues Ala-179–Phe-200. Residues Cys-201–Ala-223 lie on the Cytoplasmic side of the membrane. Residues Trp-224–Phe-248 traverse the membrane as a helical segment. At Ile-249 to Ser-256 the chain is on the extracellular side. Residues Trp-257–Leu-279 form a helical membrane-spanning segment. Residues Gly-280 to Lys-300 are Cytoplasmic-facing.

The protein belongs to the G-protein coupled receptor 1 family. Expressed abundantly in pancreatic beta cells.

It is found in the cell membrane. G-protein coupled receptor for medium and long chain saturated and unsaturated fatty acids that plays an important role in glucose homeostasis. Fatty acid binding increases glucose-stimulated insulin secretion, and may also enhance the secretion of glucagon-like peptide 1 (GLP-1). May also play a role in bone homeostasis; receptor signaling activates pathways that inhibit osteoclast differentiation. Ligand binding leads to a conformation change that triggers signaling via G-proteins that activate phospholipase C, leading to an increase of the intracellular calcium concentration. Seems to act through a G(q) and G(i)-mediated pathway. Mediates the anti-inflammatory effects of omega-3 polyunsaturated fatty acids (PUFAs) via inhibition of NLRP3 inflammasome activation. This is Free fatty acid receptor 1 (Ffar1) from Rattus norvegicus (Rat).